The following is a 371-amino-acid chain: GTPase Obg (371 aa).

One can recognise an Obg domain in the interval 1–159; it reads MKFVDEAYID…KNLKLELKVL (159 aa). An OBG-type G domain is found at 160-334; that stretch reads ADVGLLGMPN…LIRTIYKHVH (175 aa). Residues 166-173, 191-195, 213-216, 284-287, and 315-317 each bind GTP; these read GMPNAGKS, FTTLH, DIPG, NKLD, and SAL. Mg(2+) contacts are provided by Ser-173 and Thr-193.

The protein belongs to the TRAFAC class OBG-HflX-like GTPase superfamily. OBG GTPase family. In terms of assembly, monomer. Mg(2+) serves as cofactor.

The protein resides in the cytoplasm. In terms of biological role, an essential GTPase which binds GTP, GDP and possibly (p)ppGpp with moderate affinity, with high nucleotide exchange rates and a fairly low GTP hydrolysis rate. Plays a role in control of the cell cycle, stress response, ribosome biogenesis and in those bacteria that undergo differentiation, in morphogenesis control. The chain is GTPase Obg from Delftia acidovorans (strain DSM 14801 / SPH-1).